A 364-amino-acid polypeptide reads, in one-letter code: DNA replication and repair protein RecF (364 aa).

30–37 (GNNAQGKT) lines the ATP pocket.

The protein belongs to the RecF family.

It localises to the cytoplasm. Its function is as follows. The RecF protein is involved in DNA metabolism; it is required for DNA replication and normal SOS inducibility. RecF binds preferentially to single-stranded, linear DNA. It also seems to bind ATP. This chain is DNA replication and repair protein RecF, found in Clostridium botulinum (strain Okra / Type B1).